A 337-amino-acid chain; its full sequence is Ketol-acid reductoisomerase (NADP(+)) (337 aa).

In terms of domain architecture, KARI N-terminal Rossmann spans 3–183; it reads VEMFYDDDAD…GGARAGVIKT (181 aa). NADP(+) contacts are provided by residues 26-29, lysine 49, serine 52, serine 54, and 84-87; these read YGSQ and DTAQ. Residue histidine 109 is part of the active site. Glycine 135 contributes to the NADP(+) binding site. One can recognise a KARI C-terminal knotted domain in the interval 184-329; it reads TFKEETETDL…KKLRDLMSWV (146 aa). Residues aspartate 192, glutamate 196, glutamate 228, and glutamate 232 each contribute to the Mg(2+) site. Serine 253 contributes to the substrate binding site.

It belongs to the ketol-acid reductoisomerase family. Mg(2+) is required as a cofactor.

It catalyses the reaction (2R)-2,3-dihydroxy-3-methylbutanoate + NADP(+) = (2S)-2-acetolactate + NADPH + H(+). It carries out the reaction (2R,3R)-2,3-dihydroxy-3-methylpentanoate + NADP(+) = (S)-2-ethyl-2-hydroxy-3-oxobutanoate + NADPH + H(+). It functions in the pathway amino-acid biosynthesis; L-isoleucine biosynthesis; L-isoleucine from 2-oxobutanoate: step 2/4. It participates in amino-acid biosynthesis; L-valine biosynthesis; L-valine from pyruvate: step 2/4. Its function is as follows. Involved in the biosynthesis of branched-chain amino acids (BCAA). Catalyzes an alkyl-migration followed by a ketol-acid reduction of (S)-2-acetolactate (S2AL) to yield (R)-2,3-dihydroxy-isovalerate. In the isomerase reaction, S2AL is rearranged via a Mg-dependent methyl migration to produce 3-hydroxy-3-methyl-2-ketobutyrate (HMKB). In the reductase reaction, this 2-ketoacid undergoes a metal-dependent reduction by NADPH to yield (R)-2,3-dihydroxy-isovalerate. In Mycolicibacterium smegmatis (strain ATCC 700084 / mc(2)155) (Mycobacterium smegmatis), this protein is Ketol-acid reductoisomerase (NADP(+)).